A 509-amino-acid polypeptide reads, in one-letter code: MEIRAAEISAILKQQIATFGTEAEVAEVGQVLSVGDGIARVHGLDKVQAGEMVEFPGGIKGMALNLETDNVGVVIFGDDRNIKEGDVVKRTGSIVDVPVGKGLLGRVVDALGNPIDGKGPIEAASRQRVDVKAPGIIPRKSVHEPMSTGIKAVDALIPIGRGQRELVIGDRQTGKTAILVDTIINQKRWHDANDEKAKLFCIYVAVGQKRSTVAQIVKTLTDYGAMDYTIVVAATASEPAPLQFIAPYAGCTMGEYFRDNGMHALIIYDDLSKQAVAYRQMSLLLRRPPGREAYPGDVFYLHSRLLERAAKMGDAAGAGSLTALPVIETQANDVSAYIPTNVISITDGQIFLETELFYKGIRPAVNVGLSVSRVGSAAQIKAMKQVAGSIKLELAQYREMAAFAQFASDLDPATQKLLARGARLTELLKQPQFSPMATEEEVISIYAGVKGYLDKIDVRQVGRFESSLLSEIKSKAPEILTAIATEKQISAQTEEKLKAFLDAFSKTFA.

169–176 is a binding site for ATP; that stretch reads GDRQTGKT.

The protein belongs to the ATPase alpha/beta chains family. F-type ATPases have 2 components, CF(1) - the catalytic core - and CF(0) - the membrane proton channel. CF(1) has five subunits: alpha(3), beta(3), gamma(1), delta(1), epsilon(1). CF(0) has three main subunits: a(1), b(2) and c(9-12). The alpha and beta chains form an alternating ring which encloses part of the gamma chain. CF(1) is attached to CF(0) by a central stalk formed by the gamma and epsilon chains, while a peripheral stalk is formed by the delta and b chains.

The protein resides in the cell inner membrane. It carries out the reaction ATP + H2O + 4 H(+)(in) = ADP + phosphate + 5 H(+)(out). Produces ATP from ADP in the presence of a proton gradient across the membrane. The alpha chain is a regulatory subunit. This Paramagnetospirillum magneticum (strain ATCC 700264 / AMB-1) (Magnetospirillum magneticum) protein is ATP synthase subunit alpha.